The chain runs to 155 residues: Large ribosomal subunit protein bL9c (155 aa).

Belongs to the bacterial ribosomal protein bL9 family.

The protein resides in the plastid. Its subcellular location is the chloroplast. Binds to the 23S rRNA. This is Large ribosomal subunit protein bL9c from Porphyra purpurea (Red seaweed).